Consider the following 115-residue polypeptide: UPF0738 protein SAB0871 (115 aa).

This sequence belongs to the UPF0738 family.

This chain is UPF0738 protein SAB0871, found in Staphylococcus aureus (strain bovine RF122 / ET3-1).